Here is a 623-residue protein sequence, read N- to C-terminus: Quinoprotein ethanol dehydrogenase (623 aa).

The N-terminal stretch at 1–34 (MTIRSLPAALSPLSMAVQAVLLVSSLALAPAANA) is a signal peptide. Residues D45 and N51 each coordinate Ca(2+). E95 contacts pyrroloquinoline quinone. C139 and C140 are oxidised to a cystine. Pyrroloquinoline quinone-binding positions include R145, T189, and 207–209 (HGS). E213 provides a ligand contact to Ca(2+). Positions 242-279 (GRLNGKDSTPTGDVKAPSWPDDPTTETGKVESWSHGGG) are disordered. Ca(2+) is bound by residues N300 and D350. D350 acts as the Proton acceptor in catalysis. R378 lines the pyrroloquinoline quinone pocket. A disordered region spans residues 414–436 (RPVENEGQRPAKPLPGETKGKPV). WD repeat units lie at residues 515–556 (EHNE…ELWK) and 559–601 (TGSG…LTKP). Residues W523 and A587 each coordinate pyrroloquinoline quinone.

It belongs to the bacterial PQQ dehydrogenase family. Homodimer. Pyrroloquinoline quinone is required as a cofactor. Requires Ca(2+) as cofactor.

It is found in the periplasm. The enzyme catalyses a primary alcohol + 2 Fe(III)-[cytochrome c] = an aldehyde + 2 Fe(II)-[cytochrome c] + 2 H(+). It catalyses the reaction ethanol + 2 Fe(III)-[cytochrome c] = acetaldehyde + 2 Fe(II)-[cytochrome c] + 2 H(+). The catalysed reaction is ethanol + A = acetaldehyde + AH2. It carries out the reaction 1-propanol + 2 Fe(III)-[cytochrome c] = propanal + 2 Fe(II)-[cytochrome c] + 2 H(+). The protein operates within alcohol metabolism; ethanol degradation; acetate from ethanol: step 1/2. Its activity is regulated as follows. Enhanced by the presence of ethylamine or NH4(+) ions. Its function is as follows. Catalyzes the oxidation of ethanol and other primary alcohols to the corresponding aldehydes, except methanol, which is not a substrate. Uses a specific inducible cytochrome c550, encoded by the adjacent gene in the locus, as electron acceptor. Is a key enzyme of the carbon and energy metabolism during growth of P.putida on ethanol as the sole carbon and energy source. Displays lower activity on secondary alcohols, aldehydes and diols. Is not active with sugar alcohols such as glycerol and D-sorbitol. In vitro, reacts well with phenazine methosulfate (PMS) as an electron acceptor but not with NAD(P), potassium ferricyanide, or molecular oxygen. The protein is Quinoprotein ethanol dehydrogenase of Pseudomonas putida (Arthrobacter siderocapsulatus).